The following is a 238-amino-acid chain: Uridylate kinase (238 aa).

Residue 10 to 13 participates in ATP binding; it reads KFSG. An involved in allosteric activation by GTP region spans residues 18–23; that stretch reads GENGFG. Gly-52 is a UMP binding site. Positions 53 and 57 each coordinate ATP. Residues Asp-73 and 134 to 141 contribute to the UMP site; that span reads TGNPFFTT. ATP is bound by residues Thr-161, Tyr-167, and Asp-170.

It belongs to the UMP kinase family. Homohexamer.

The protein resides in the cytoplasm. The enzyme catalyses UMP + ATP = UDP + ADP. The protein operates within pyrimidine metabolism; CTP biosynthesis via de novo pathway; UDP from UMP (UMPK route): step 1/1. With respect to regulation, allosterically activated by GTP. Inhibited by UTP. Functionally, catalyzes the reversible phosphorylation of UMP to UDP. The chain is Uridylate kinase from Campylobacter concisus (strain 13826).